Here is a 210-residue protein sequence, read N- to C-terminus: Ribonuclease HII (210 aa).

The 193-residue stretch at 18-210 (GLIAGVDEVG…FKPVKALLGL (193 aa)) folds into the RNase H type-2 domain. Residues D24, E25, and D116 each contribute to the a divalent metal cation site.

Belongs to the RNase HII family. Mn(2+) is required as a cofactor. The cofactor is Mg(2+).

It localises to the cytoplasm. The enzyme catalyses Endonucleolytic cleavage to 5'-phosphomonoester.. Endonuclease that specifically degrades the RNA of RNA-DNA hybrids. This Shewanella baltica (strain OS223) protein is Ribonuclease HII.